The primary structure comprises 220 residues: Large ribosomal subunit protein bL21 (220 aa).

The disordered stretch occupies residues 109-158 (SKKVAAKPATSEEKAAEEKPAKAKKEAAEKGASPRETKAAPLFSAPEGEP). A compositionally biased stretch (basic and acidic residues) spans 118–146 (TSEEKAAEEKPAKAKKEAAEKGASPRETK).

This sequence belongs to the bacterial ribosomal protein bL21 family. Part of the 50S ribosomal subunit. Contacts protein L20.

This protein binds to 23S rRNA in the presence of protein L20. This chain is Large ribosomal subunit protein bL21, found in Chelativorans sp. (strain BNC1).